The chain runs to 482 residues: Auxin transporter-like protein 2 (482 aa).

Over 1–58 the chain is Cytoplasmic; sequence MVPAGDQAEEAIVADAGKEEAEVRAAMGVEQDGKFSMTSLLWHGGSVWDAWFSCASNQ. The chain crosses the membrane as a helical span at residues 59–76; sequence VAQVLLTLPYSFSQLGML. Topologically, residues 77–78 are extracellular; it reads SG. The chain crosses the membrane as a helical span at residues 79 to 99; sequence LLLQVFYGLMGSWTAYLISVL. Topologically, residues 100 to 134 are cytoplasmic; the sequence is YVEYRARKEKEGVSFKNHVIQWFEVLDGLLGPYWK. A helical membrane pass occupies residues 135 to 155; that stretch reads AAGLAFNCTFLLFGSVIQLIA. Over 156–171 the chain is Extracellular; the sequence is CASNIYYINDRLDKRT. Residues 172–192 traverse the membrane as a helical segment; that stretch reads WTYIFGACCSTTVFIPSFHNY. A topological domain (cytoplasmic) is located at residue R193. The helical transmembrane segment at 194–214 threads the bilayer; it reads IWSFLGLGMTTYTAWYLAIAA. The Extracellular portion of the chain corresponds to 215–231; that stretch reads AVHGQVDGVTHSGPSKM. Residues 232 to 252 form a helical membrane-spanning segment; sequence VLYFTGATNILYTFGGHAVTV. At 253–265 the chain is on the cytoplasmic side; it reads EIMHAMWKPQKFK. A helical membrane pass occupies residues 266–286; the sequence is YIYLVATLYVFTLTLPSASAM. Over 287–313 the chain is Extracellular; that stretch reads YWAFGDALLTHSNAFSLLPRSGWRDAA. A helical transmembrane segment spans residues 314–334; that stretch reads VILMLIHQFITFGFACTPLYF. Residues 335-355 lie on the Cytoplasmic side of the membrane; that stretch reads VWEKAIGMHGTRSVLTRALAR. Residues 356–376 traverse the membrane as a helical segment; the sequence is LPIVVPIWFLAIIFPFFGPIN. A topological domain (extracellular) is located at residue S377. The helical transmembrane segment at 378–398 threads the bilayer; it reads AVGALLVSFTVYIIPSLSHIL. Over 399-423 the chain is Cytoplasmic; that stretch reads TYRSASARLNAAEKPPPFLPSWSGM. Residues 424-444 form a helical membrane-spanning segment; it reads FVVNVFVVAWVLVVGFGLGGW. Residues 445–482 are Extracellular-facing; the sequence is ASVTNFIKQIDTFGLFAKCYQCPPRAHAGAPLPAPPRH.

This sequence belongs to the amino acid/polyamine transporter 2 family. Amino acid/auxin permease (AAAP) (TC 2.A.18.1) subfamily.

Its subcellular location is the cell membrane. Functionally, carrier protein involved in proton-driven auxin influx. May mediate the formation of auxin gradient from developing leaves (site of auxin biosynthesis) to tips. The polypeptide is Auxin transporter-like protein 2 (Oryza sativa subsp. japonica (Rice)).